A 182-amino-acid chain; its full sequence is ATP-dependent protease subunit HslV (182 aa).

Threonine 10 is an active-site residue. Na(+) is bound by residues alanine 166, cysteine 169, and serine 172.

The protein belongs to the peptidase T1B family. HslV subfamily. In terms of assembly, a double ring-shaped homohexamer of HslV is capped on each side by a ring-shaped HslU homohexamer. The assembly of the HslU/HslV complex is dependent on binding of ATP.

It is found in the cytoplasm. The enzyme catalyses ATP-dependent cleavage of peptide bonds with broad specificity.. Its activity is regulated as follows. Allosterically activated by HslU binding. Its function is as follows. Protease subunit of a proteasome-like degradation complex believed to be a general protein degrading machinery. The polypeptide is ATP-dependent protease subunit HslV (Rickettsia bellii (strain OSU 85-389)).